Consider the following 522-residue polypeptide: Proactivator polypeptide-like 1 (522 aa).

A signal peptide spans 1–17 (MLCALILWSGLLGAARA). The propeptide occupies 18–59 (SPISVPRECAKGSEVWCQDLQAAAKCRAVRHCQSAVWNKPTV). The Saposin A-type 1 domain maps to 19–59 (PISVPRECAKGSEVWCQDLQAAAKCRAVRHCQSAVWNKPTV). Saposin B-type domains follow at residues 60–144 (KSLP…EPLQ), 183–261 (EGAV…ERES), 291–371 (LGLT…GSKR), and 393–474 (QGSF…HGPK). 3 disulfide bridges follow: Cys64/Cys140, Cys67/Cys134, and Cys95/Cys107. A propeptide spanning residues 146–183 (HLAETTSERPLTQEDANEVMAPFLSNGALSFHPSQMPE) is cleaved from the precursor. Disulfide bonds link Cys187/Cys257, Cys190/Cys251, and Cys216/Cys227. A glycan (N-linked (GlcNAc...) asparagine) is linked at Asn204. A propeptide spanning residues 261-290 (SAHWLTRVAAVDGVPSLEMEMPRTNELQMQ) is cleaved from the precursor. Intrachain disulfides connect Cys295/Cys367, Cys298/Cys361, and Cys326/Cys337. Residue Asn312 is glycosylated (N-linked (GlcNAc...) (high mannose) asparagine). Positions 371 to 392 (RRARSISRAVATTPSLPVDEEN) are excised as a propeptide. Cystine bridges form between Cys397-Cys470, Cys400-Cys464, and Cys428-Cys439. A propeptide spanning residues 475–522 (TPLLGTDQCVMGPSFWCKSPEAAEMCNALEHCQRLVWKKPVSKINEQP) is cleaved from the precursor. One can recognise a Saposin A-type 2 domain in the interval 476–516 (PLLGTDQCVMGPSFWCKSPEAAEMCNALEHCQRLVWKKPVS).

It is found in the secreted. Its function is as follows. May activate the lysosomal degradation of sphingolipids. The polypeptide is Proactivator polypeptide-like 1 (Psapl1) (Mus musculus (Mouse)).